Here is a 366-residue protein sequence, read N- to C-terminus: PTI1-like tyrosine-protein kinase 2 (366 aa).

Residues 8 to 23 show a composition bias toward basic and acidic residues; it reads GDKKGDSDLSNEEVHL. Residues 8-50 form a disordered region; it reads GDKKGDSDLSNEEVHLKSPWQNSEANQKNQKPQAVVKPEAQKE. Over residues 26–39 the composition is skewed to polar residues; that stretch reads PWQNSEANQKNQKP. One can recognise a Protein kinase domain in the interval 71 to 353; it reads FGSKSLIGEG…IVVKALQPLL (283 aa). ATP-binding positions include 77-85 and Lys-99; that span reads IGEGSYGRV. Asp-203 (proton acceptor) is an active-site residue.

Belongs to the protein kinase superfamily. Tyr protein kinase family. In terms of assembly, interacts with OXI1. Autophosphorylated and phosphorylated by OXI1.

The enzyme catalyses L-tyrosyl-[protein] + ATP = O-phospho-L-tyrosyl-[protein] + ADP + H(+). With respect to regulation, strongly activated in response to phosphatidic acid (PA) and xylanase in a OXI1- and PDK1-dependent manner, and, to a lesser extent, by hydrogen peroxide and flagellin in a OXI1-dependent manner. Its function is as follows. Probable tyrosine-protein kinase involved in oxidative burst-mediated signaling leading to specific genes expression. The polypeptide is PTI1-like tyrosine-protein kinase 2 (PTI12) (Arabidopsis thaliana (Mouse-ear cress)).